The sequence spans 188 residues: Peptidyl-tRNA hydrolase (188 aa).

Tyrosine 14 contacts tRNA. Histidine 19 acts as the Proton acceptor in catalysis. TRNA contacts are provided by tyrosine 64, asparagine 66, and asparagine 112.

It belongs to the PTH family. Monomer.

It localises to the cytoplasm. The catalysed reaction is an N-acyl-L-alpha-aminoacyl-tRNA + H2O = an N-acyl-L-amino acid + a tRNA + H(+). Functionally, hydrolyzes ribosome-free peptidyl-tRNAs (with 1 or more amino acids incorporated), which drop off the ribosome during protein synthesis, or as a result of ribosome stalling. Catalyzes the release of premature peptidyl moieties from peptidyl-tRNA molecules trapped in stalled 50S ribosomal subunits, and thus maintains levels of free tRNAs and 50S ribosomes. In Clostridium novyi (strain NT), this protein is Peptidyl-tRNA hydrolase.